We begin with the raw amino-acid sequence, 371 residues long: Maltose/maltodextrin import ATP-binding protein MalK (371 aa).

The region spanning 4-234 (VQLQNVTKAW…PADRFVAGFI (231 aa)) is the ABC transporter domain. Residue 36 to 43 (GPSGCGKS) participates in ATP binding.

Belongs to the ABC transporter superfamily. Maltooligosaccharide importer (TC 3.A.1.1.1) family. As to quaternary structure, the complex is composed of two ATP-binding proteins (MalK), two transmembrane proteins (MalG and MalK) and a solute-binding protein (MalE).

Its subcellular location is the cell inner membrane. It catalyses the reaction D-maltose(out) + ATP + H2O = D-maltose(in) + ADP + phosphate + H(+). In terms of biological role, part of the ABC transporter complex MalEFGK involved in maltose/maltodextrin import. Responsible for energy coupling to the transport system. The protein is Maltose/maltodextrin import ATP-binding protein MalK of Escherichia coli O6:H1 (strain CFT073 / ATCC 700928 / UPEC).